Consider the following 499-residue polypeptide: Aspartyl/glutamyl-tRNA(Asn/Gln) amidotransferase subunit B (499 aa).

It belongs to the GatB/GatE family. GatB subfamily. Heterotrimer of A, B and C subunits.

The catalysed reaction is L-glutamyl-tRNA(Gln) + L-glutamine + ATP + H2O = L-glutaminyl-tRNA(Gln) + L-glutamate + ADP + phosphate + H(+). It catalyses the reaction L-aspartyl-tRNA(Asn) + L-glutamine + ATP + H2O = L-asparaginyl-tRNA(Asn) + L-glutamate + ADP + phosphate + 2 H(+). In terms of biological role, allows the formation of correctly charged Asn-tRNA(Asn) or Gln-tRNA(Gln) through the transamidation of misacylated Asp-tRNA(Asn) or Glu-tRNA(Gln) in organisms which lack either or both of asparaginyl-tRNA or glutaminyl-tRNA synthetases. The reaction takes place in the presence of glutamine and ATP through an activated phospho-Asp-tRNA(Asn) or phospho-Glu-tRNA(Gln). This is Aspartyl/glutamyl-tRNA(Asn/Gln) amidotransferase subunit B from Bartonella quintana (strain Toulouse) (Rochalimaea quintana).